Here is a 145-residue protein sequence, read N- to C-terminus: Deoxyuridine 5'-triphosphate nucleotidohydrolase (145 aa).

Substrate-binding positions include 62–64, Asn-75, 79–81, and Lys-89; these read RSG and TVD.

Belongs to the dUTPase family. Mg(2+) serves as cofactor.

The catalysed reaction is dUTP + H2O = dUMP + diphosphate + H(+). Its pathway is pyrimidine metabolism; dUMP biosynthesis; dUMP from dCTP (dUTP route): step 2/2. Its function is as follows. This enzyme is involved in nucleotide metabolism: it produces dUMP, the immediate precursor of thymidine nucleotides and it decreases the intracellular concentration of dUTP so that uracil cannot be incorporated into DNA. The protein is Deoxyuridine 5'-triphosphate nucleotidohydrolase of Helicobacter pylori (strain ATCC 700392 / 26695) (Campylobacter pylori).